The primary structure comprises 293 residues: Glutamyl-Q tRNA(Asp) synthetase (293 aa).

L-glutamate-binding positions include 26-30 (RFAPS) and aspartate 62. Positions 29 to 39 (PSPTGLLHLGN) match the 'HIGH' region motif. Residues cysteine 118, cysteine 120, tyrosine 131, and cysteine 135 each contribute to the Zn(2+) site. L-glutamate contacts are provided by tyrosine 178 and arginine 196. Residues 234–238 (KLSKR) carry the 'KMSKS' region motif. Lysine 237 is a binding site for ATP.

It belongs to the class-I aminoacyl-tRNA synthetase family. GluQ subfamily. It depends on Zn(2+) as a cofactor.

Catalyzes the tRNA-independent activation of glutamate in presence of ATP and the subsequent transfer of glutamate onto a tRNA(Asp). Glutamate is transferred on the 2-amino-5-(4,5-dihydroxy-2-cyclopenten-1-yl) moiety of the queuosine in the wobble position of the QUC anticodon. The sequence is that of Glutamyl-Q tRNA(Asp) synthetase from Synechococcus sp. (strain CC9605).